The chain runs to 306 residues: Pyridoxal 5'-phosphate synthase subunit PdxS (306 aa).

Aspartate 36 lines the D-ribose 5-phosphate pocket. Lysine 93 functions as the Schiff-base intermediate with D-ribose 5-phosphate in the catalytic mechanism. Glycine 165 is a D-ribose 5-phosphate binding site. Residue arginine 177 coordinates D-glyceraldehyde 3-phosphate. D-ribose 5-phosphate contacts are provided by residues glycine 226 and 247 to 248; that span reads GS.

Belongs to the PdxS/SNZ family. In the presence of PdxT, forms a dodecamer of heterodimers.

The catalysed reaction is aldehydo-D-ribose 5-phosphate + D-glyceraldehyde 3-phosphate + L-glutamine = pyridoxal 5'-phosphate + L-glutamate + phosphate + 3 H2O + H(+). It participates in cofactor biosynthesis; pyridoxal 5'-phosphate biosynthesis. Catalyzes the formation of pyridoxal 5'-phosphate from ribose 5-phosphate (RBP), glyceraldehyde 3-phosphate (G3P) and ammonia. The ammonia is provided by the PdxT subunit. Can also use ribulose 5-phosphate and dihydroxyacetone phosphate as substrates, resulting from enzyme-catalyzed isomerization of RBP and G3P, respectively. The sequence is that of Pyridoxal 5'-phosphate synthase subunit PdxS from Salinispora arenicola (strain CNS-205).